The chain runs to 309 residues: Ribose-phosphate pyrophosphokinase (309 aa).

ATP is bound by residues 37–39 and 96–97; these read DGE and RQ. Mg(2+)-binding residues include His-130 and Asp-169. Lys-192 is an active-site residue. Residues Arg-194, Asp-218, and 222 to 226 each bind D-ribose 5-phosphate; that span reads DTAGT.

This sequence belongs to the ribose-phosphate pyrophosphokinase family. Class I subfamily. Homohexamer. Mg(2+) is required as a cofactor.

Its subcellular location is the cytoplasm. It catalyses the reaction D-ribose 5-phosphate + ATP = 5-phospho-alpha-D-ribose 1-diphosphate + AMP + H(+). The protein operates within metabolic intermediate biosynthesis; 5-phospho-alpha-D-ribose 1-diphosphate biosynthesis; 5-phospho-alpha-D-ribose 1-diphosphate from D-ribose 5-phosphate (route I): step 1/1. In terms of biological role, involved in the biosynthesis of the central metabolite phospho-alpha-D-ribosyl-1-pyrophosphate (PRPP) via the transfer of pyrophosphoryl group from ATP to 1-hydroxyl of ribose-5-phosphate (Rib-5-P). The protein is Ribose-phosphate pyrophosphokinase of Helicobacter hepaticus (strain ATCC 51449 / 3B1).